The sequence spans 447 residues: 3-phosphoshikimate 1-carboxyvinyltransferase 2 (447 aa).

3 residues coordinate 3-phosphoshikimate: Lys40, Ser41, and Arg45. Phosphoenolpyruvate is bound at residue Lys40. Phosphoenolpyruvate-binding residues include Gly109 and Arg138. Positions 184, 185, 186, 329, and 356 each coordinate 3-phosphoshikimate. Gln186 contributes to the phosphoenolpyruvate binding site. Residue Asp329 is the Proton acceptor of the active site. 3 residues coordinate phosphoenolpyruvate: Arg360, Arg403, and Lys428.

It belongs to the EPSP synthase family. As to quaternary structure, monomer.

It is found in the cytoplasm. The enzyme catalyses 3-phosphoshikimate + phosphoenolpyruvate = 5-O-(1-carboxyvinyl)-3-phosphoshikimate + phosphate. The protein operates within metabolic intermediate biosynthesis; chorismate biosynthesis; chorismate from D-erythrose 4-phosphate and phosphoenolpyruvate: step 6/7. In terms of biological role, catalyzes the transfer of the enolpyruvyl moiety of phosphoenolpyruvate (PEP) to the 5-hydroxyl of shikimate-3-phosphate (S3P) to produce enolpyruvyl shikimate-3-phosphate and inorganic phosphate. In Halalkalibacterium halodurans (strain ATCC BAA-125 / DSM 18197 / FERM 7344 / JCM 9153 / C-125) (Bacillus halodurans), this protein is 3-phosphoshikimate 1-carboxyvinyltransferase 2.